A 264-amino-acid polypeptide reads, in one-letter code: Thymidylate synthase (264 aa).

Position 21 (Arg-21) interacts with dUMP. His-51 provides a ligand contact to (6R)-5,10-methylene-5,6,7,8-tetrahydrofolate. 126-127 (RR) contacts dUMP. Cys-146 (nucleophile) is an active-site residue. DUMP contacts are provided by residues 166 to 169 (RSAD), Asn-177, and 207 to 209 (HLY). Asp-169 contacts (6R)-5,10-methylene-5,6,7,8-tetrahydrofolate. (6R)-5,10-methylene-5,6,7,8-tetrahydrofolate is bound at residue Ala-263.

The protein belongs to the thymidylate synthase family. Bacterial-type ThyA subfamily. Homodimer.

It is found in the cytoplasm. The catalysed reaction is dUMP + (6R)-5,10-methylene-5,6,7,8-tetrahydrofolate = 7,8-dihydrofolate + dTMP. It functions in the pathway pyrimidine metabolism; dTTP biosynthesis. Catalyzes the reductive methylation of 2'-deoxyuridine-5'-monophosphate (dUMP) to 2'-deoxythymidine-5'-monophosphate (dTMP) while utilizing 5,10-methylenetetrahydrofolate (mTHF) as the methyl donor and reductant in the reaction, yielding dihydrofolate (DHF) as a by-product. This enzymatic reaction provides an intracellular de novo source of dTMP, an essential precursor for DNA biosynthesis. The sequence is that of Thymidylate synthase from Mesorhizobium japonicum (strain LMG 29417 / CECT 9101 / MAFF 303099) (Mesorhizobium loti (strain MAFF 303099)).